Consider the following 361-residue polypeptide: MALTRLLIKDFRNIEAADLALVPGFNFLVGANGSGKTSVLEAIYTLGHGRAFRSIQAGRVIRHDQPEFVLHGRIDGTETERAVGLSKNRQGDSKVRIDGSDGHKVAELAQLLPIQLITPEGFTLLNGGPKYRRAFLDWGCFHNEPGFFAAWSNMKRLQRQRNAALRQVSHYGQLRAWDQELVPLAERISEWRAQYSAAIANDIAATCTQFLPEFSLSFSFQRGWDKESEYAELLERQFERDRMLGYTALGPHKADFRIRTSGVAVEDMLSRGQLKLLMCALRLAQGEFLTRQNGLRCLYLIDDFASELDSTRRRLLAERLKATHAQVFVSAVSAEQIEDMIGEKGKMFRVEQGKITVQSQD.

30–37 (GANGSGKT) contributes to the ATP binding site.

It belongs to the RecF family.

It localises to the cytoplasm. The RecF protein is involved in DNA metabolism; it is required for DNA replication and normal SOS inducibility. RecF binds preferentially to single-stranded, linear DNA. It also seems to bind ATP. This is DNA replication and repair protein RecF from Pectobacterium atrosepticum (strain SCRI 1043 / ATCC BAA-672) (Erwinia carotovora subsp. atroseptica).